A 226-amino-acid polypeptide reads, in one-letter code: Transcriptional regulatory protein DpiA (226 aa).

Residues 6-122 (TLLIVEDETP…RLGQTLTRFR (117 aa)) enclose the Response regulatory domain. Asp57 bears the 4-aspartylphosphate mark. The H-T-H motif DNA-binding region spans 180-199 (AETVAQALTISRTTARRYLE).

Post-translationally, phosphorylated and activated by DpiB.

It is found in the cytoplasm. Its function is as follows. Member of the two-component regulatory system DpiA/DpiB, which is essential for expression of citrate-specific fermentation genes and genes involved in plasmid inheritance. Could be involved in response to both the presence of citrate and external redox conditions. The sequence is that of Transcriptional regulatory protein DpiA (dpiA) from Escherichia coli O157:H7.